The primary structure comprises 376 residues: 28S rRNA (uridine-N(3))-methyltransferase (376 aa).

Disordered regions lie at residues 1–33 (MAER…EEKK) and 49–71 (AQEE…DRGR). The span at 15 to 33 (HGQRIEWRKWKQQKKEEKK) shows a compositional bias: basic and acidic residues. Threonine 289, arginine 292, glycine 312, asparagine 341, and threonine 342 together coordinate S-adenosyl-L-homocysteine. 4 residues coordinate S-adenosyl-L-methionine: arginine 292, glycine 312, asparagine 341, and threonine 342.

The protein belongs to the class IV-like SAM-binding methyltransferase superfamily. In terms of assembly, interacts with INCA1.

It localises to the cytoplasm. Its subcellular location is the cytoskeleton. The protein resides in the spindle. It is found in the chromosome. The protein localises to the centromere. It localises to the kinetochore. Its subcellular location is the microtubule organizing center. The protein resides in the centrosome. The catalysed reaction is uridine in 28S rRNA + S-adenosyl-L-methionine = N(3)-methyluridine in 28S rRNA + S-adenosyl-L-homocysteine + H(+). Functionally, S-adenosyl-L-methionine-dependent methyltransferase that specifically methylates the N3 position of a uridine in 28S rRNA. Required for association of the centrosomes with the poles of the bipolar mitotic spindle during metaphase. Also involved in chromosome alignment. May promote centrosome maturation probably by recruiting A-kinase anchor protein AKAP9 to centrosomes in early mitosis. Binds specifically to miRNA MIR145 hairpin, regulates MIR145 expression at a postranscriptional level. This is 28S rRNA (uridine-N(3))-methyltransferase from Homo sapiens (Human).